Here is a 608-residue protein sequence, read N- to C-terminus: tRNA (guanine(37)-N(1))-methyltransferase 1 (608 aa).

Positions 207–229 are disordered; that stretch reads SRPKKKKRRKEEERSEGKKRTGK. Basic and acidic residues predominate over residues 216 to 229; sequence KEEERSEGKKRTGK. Residues Arg-425, 463 to 464, 491 to 492, and Asn-514 each bind S-adenosyl-L-methionine; these read DL and DG.

This sequence belongs to the class I-like SAM-binding methyltransferase superfamily. TRM5/TYW2 family. Monomer.

It localises to the mitochondrion matrix. The protein resides in the nucleus. It is found in the cytoplasm. It carries out the reaction guanosine(37) in tRNA + S-adenosyl-L-methionine = N(1)-methylguanosine(37) in tRNA + S-adenosyl-L-homocysteine + H(+). Functionally, specifically methylates the N1 position of guanosine-37 in various cytoplasmic and mitochondrial tRNAs. Methylation is not dependent on the nature of the nucleoside 5' of the target nucleoside. This is the first step in the biosynthesis of wybutosine (yW), a modified base adjacent to the anticodon of tRNAs and required for accurate decoding. This Vitis vinifera (Grape) protein is tRNA (guanine(37)-N(1))-methyltransferase 1.